The primary structure comprises 893 residues: MARYTQRPENALKRANEFIEVGKPLRALDTLQEVFRNKRWNYTYSETVIEPLMFKYLYLCVELKKSHIAKEGLFQYRNMFQLVNVNSLENVIRGYLKMAEEHTEAAQAQSSAAVAVLELDDLDNIATPESILMSAVCGEDAQDRSDRTILLPWVKFLWESYCQCLELLRVNTHCEALYHDIARMAFQFCLKYNRKSEFRRLCDKLRKHLEDICKSNNQTTGVSITKPETQQLCLDTRLYLLDSAIQMELWQEAYKAIEDIHGLMAMSKKTPVPKTMANYYQKLAMVFSKAGNQLFHAAALLKLFQLTRELKKNLTKEDLQRMAAHVLLATLSIPLPSAHPEFDRFIEADKSPLEKAQKLAVLLGLPQPPTRVSLIRDVVRLNVPNLVSDEFRNLYNWLEVDFNPLNLCKRIQSIVDTIESTEKENTLLTPYIQSLKDVTIMRLIRQISQVYESIEFKRLLELAPFCNIFELEKLLVESVRHNDMQIRIDHQRNSIFFGTDLTESQREYRPDGPALQSMPSEQIRSQLVNMSTVLTRAVSVVYPNRERDQRAKLRTQMVQHYHEIKDREHQRILQRQKIIEDRKEFIEKQNNARELEEARRHEDESRKAKQAEQKRLEQEQEKRERKRHENEIQAIKEKSLKEKVQQISQTAHGKKMLSKLDEEGIKKLDAEQIAMRESEELQRERKELQSKIKSQEKKIDYFERAKRLEEIPLFEKYLAEKNVKDKEFWESTEQTRIELDIAERKDAVAQQARLQRMYPDRDEYLNALKKERASLYVEKLKKFEIALAEERKKRLADRIVRRREERRQAYLRAKEEERFRKEEEIRHAREAEERAAAEARRLEREAEDEKRRQQYEKQRAKEEEAERKIQEDRDRLAREVAVEPSTCFSRRRQ.

Positions 319-502 (LQRMAAHVLL…NSIFFGTDLT (184 aa)) constitute a PCI domain. 2 coiled-coil regions span residues 576–707 (QKII…RAKR) and 784–881 (EIAL…REVA). Disordered stretches follow at residues 592 to 634 (AREL…EIQA) and 837 to 893 (AEAR…RRRQ). Residues 837 to 881 (AEARRLEREAEDEKRRQQYEKQRAKEEEAERKIQEDRDRLAREVA) are compositionally biased toward basic and acidic residues.

It belongs to the eIF-3 subunit A family. Component of the eukaryotic translation initiation factor 3 (eIF-3) complex. The eIF-3 complex interacts with pix.

The protein resides in the cytoplasm. RNA-binding component of the eukaryotic translation initiation factor 3 (eIF-3) complex, which is involved in protein synthesis of a specialized repertoire of mRNAs and, together with other initiation factors, stimulates binding of mRNA and methionyl-tRNAi to the 40S ribosome. The eIF-3 complex specifically targets and initiates translation of a subset of mRNAs involved in cell proliferation. The chain is Eukaryotic translation initiation factor 3 subunit A from Drosophila grimshawi (Hawaiian fruit fly).